Consider the following 149-residue polypeptide: CyanoQ (149 aa).

A signal peptide spans 1–21; it reads MSRLRSLLSLILVLVTTVLVS. Cys-22 carries the N-palmitoyl cysteine lipid modification. A lipid anchor (S-diacylglycerol cysteine) is attached at Cys-22.

This sequence belongs to the PsbQ family. CyanoQ subfamily. PSII is composed of 1 copy each of membrane proteins PsbA, PsbB, PsbC, PsbD, PsbE, PsbF, PsbH, PsbI, PsbJ, PsbK, PsbL, PsbM, PsbT, PsbX, PsbY, PsbZ, Psb30/Ycf12, peripheral proteins PsbO, CyanoQ (PsbQ), PsbU, PsbV and a large number of cofactors. It forms dimeric complexes. Pull-down experiments with His-tagged PsbQ pull down dimeric, but not monomeric, PSII. The N-terminus is blocked. Upon expression in E.coli the N-terminus is modified with a diacylglycerol and an acyl group bound to two palmitates and one palmitoleate.

It localises to the cellular thylakoid membrane. Functionally, one of the extrinsic, lumenal subunits of photosystem II (PSII), which stabilize and protect the oxygen-evolving complex. PSII is a light-driven water plastoquinone oxidoreductase, using light energy to abstract electrons from H(2)O, generating a proton gradient subsequently used for ATP formation. Plays a role in the stability of the oxygen-evolving center on the luminal side of PSII. Required for optimal photoautotrophic growth in the absence of Ca(2+) or Cl(-), functions in optimizing PSII water oxidation/O(2) evolving activity. Requires PsbO to bind to PSII. The polypeptide is CyanoQ (Synechocystis sp. (strain ATCC 27184 / PCC 6803 / Kazusa)).